Consider the following 172-residue polypeptide: Nicotinamide-nucleotide adenylyltransferase (172 aa).

Belongs to the archaeal NMN adenylyltransferase family.

It is found in the cytoplasm. It catalyses the reaction beta-nicotinamide D-ribonucleotide + ATP + H(+) = diphosphate + NAD(+). Its pathway is cofactor biosynthesis; NAD(+) biosynthesis; NAD(+) from nicotinamide D-ribonucleotide: step 1/1. The chain is Nicotinamide-nucleotide adenylyltransferase from Methanococcus aeolicus (strain ATCC BAA-1280 / DSM 17508 / OCM 812 / Nankai-3).